We begin with the raw amino-acid sequence, 670 residues long: Small ribosomal subunit protein mS39 (670 aa).

The transit peptide at 1 to 13 (MAAPCVRLGSVRC) directs the protein to the mitochondrion. PPR repeat units follow at residues 129–163 (VEGVSEEALKERIQLRRVKESVDLFDQLLQGGTAP), 164–199 (SLETTNKLLDLISFYGDREPVRDIQTSEQEQQEVQD), 209–239 (RPRQYRKASEILGSWRENNNAERIFNLMPER), 240–274 (NAHSFCTLIQGMAKFGSSSKAFNIYTDLMNNRLTA), 275–314 (DVQTFNALILAAPDIKEKYNEKWDLIVELLKHMVQQNVRP), 315–351 (NLLTFNSVLKSLRKCGPMAKGLALQTINEMKALNIEP), 352–392 (SLAT…FTLR), 396–430 (DVYFFTNAMRVCLDLKDIELAYRLHTLQQTADNRG), 438–472 (QSTYYGRFFNLLCMMESIDIILKWYRELIPSLYYP), 473–507 (NSRGMLDLLQALDMDNRLDLIPQIWKDIKQIGHSN), and 556–590 (SAGSLGNVSALLARAGKTVEAWKMLQLFKKSHRVP). Positions 187–213 (IQTSEQEQQEVQDQQETEDPKKRPRQY) are disordered. Over residues 193-203 (EQQEVQDQQET) the composition is skewed to acidic residues. Residues 648 to 670 (EDLQKSHSSSSSSSSSSSDSDRE) are disordered. Over residues 653 to 670 (SHSSSSSSSSSSSDSDRE) the composition is skewed to low complexity.

The protein belongs to the mitochondrion-specific ribosomal protein mS39 family.

It localises to the mitochondrion. In terms of biological role, mitochondrial protein that may have a role in mitochondrial translation. This chain is Small ribosomal subunit protein mS39 (ptcd3), found in Xenopus tropicalis (Western clawed frog).